The following is a 103-amino-acid chain: Large ribosomal subunit protein bL21 (103 aa).

Belongs to the bacterial ribosomal protein bL21 family. As to quaternary structure, part of the 50S ribosomal subunit. Contacts protein L20.

Its function is as follows. This protein binds to 23S rRNA in the presence of protein L20. The protein is Large ribosomal subunit protein bL21 of Thermobifida fusca (strain YX).